Consider the following 345-residue polypeptide: Anthranilate phosphoribosyltransferase (345 aa).

5-phospho-alpha-D-ribose 1-diphosphate contacts are provided by residues G84, 87–88 (GD), T92, 94–97 (NIST), 112–120 (KHGNRSVSS), and S124. G84 is an anthranilate binding site. Residue S96 coordinates Mg(2+). Position 115 (N115) interacts with anthranilate. Residue R170 coordinates anthranilate. 2 residues coordinate Mg(2+): D229 and E230.

This sequence belongs to the anthranilate phosphoribosyltransferase family. In terms of assembly, homodimer. Mg(2+) is required as a cofactor.

It catalyses the reaction N-(5-phospho-beta-D-ribosyl)anthranilate + diphosphate = 5-phospho-alpha-D-ribose 1-diphosphate + anthranilate. The protein operates within amino-acid biosynthesis; L-tryptophan biosynthesis; L-tryptophan from chorismate: step 2/5. In terms of biological role, catalyzes the transfer of the phosphoribosyl group of 5-phosphorylribose-1-pyrophosphate (PRPP) to anthranilate to yield N-(5'-phosphoribosyl)-anthranilate (PRA). The polypeptide is Anthranilate phosphoribosyltransferase (Xanthomonas campestris pv. campestris (strain 8004)).